A 255-amino-acid polypeptide reads, in one-letter code: Tritrans,polycis-undecaprenyl-diphosphate synthase (geranylgeranyl-diphosphate specific) (255 aa).

Residue Asp-34 is part of the active site. Residue Asp-34 coordinates Mg(2+). Substrate contacts are provided by residues 35–38 (GNRR), His-51, and 79–81 (STE). Asn-82 functions as the Proton acceptor in the catalytic mechanism. Substrate is bound by residues Phe-83, Arg-85, Arg-204, and 210–212 (RIS). Glu-223 is a Mg(2+) binding site.

It belongs to the UPP synthase family. In terms of assembly, homodimer. It depends on Mg(2+) as a cofactor.

It catalyses the reaction geranylgeranyl diphosphate + 7 isopentenyl diphosphate = tri-trans,hepta-cis-undecaprenyl diphosphate + 7 diphosphate. Catalyzes the sequential condensation of isopentenyl diphosphate (IPP) with geranylgeranyl diphosphate (GGPP) to yield (2Z,6Z,10Z,14Z,18Z,22Z,26Z,30E,34E,38E)-undecaprenyl diphosphate (tritrans,heptacis-UPP). It is probably the precursor of glycosyl carrier lipids. This Picrophilus torridus (strain ATCC 700027 / DSM 9790 / JCM 10055 / NBRC 100828 / KAW 2/3) protein is Tritrans,polycis-undecaprenyl-diphosphate synthase (geranylgeranyl-diphosphate specific).